The primary structure comprises 392 residues: Protein O-glucosyltransferase 1 (392 aa).

An N-terminal signal peptide occupies residues 1 to 23; it reads MELGVSSQLWLWLLLLLLPPVPG. Disulfide bonds link C49-C56, C54-C357, C102-C108, and C263-C286. N-linked (GlcNAc...) asparagine glycosylation occurs at N53. An interaction with the consensus sequence C-X-S-X-[PA]-C in peptide substrates region spans residues 103–107; it reads MFPSR. D133 serves as the catalytic Proton donor/acceptor. The interval 172-178 is interaction with the consensus sequence C-X-S-X-[PA]-C in peptide substrates; it reads AVWPIYP. Y177 serves as a coordination point for UDP-alpha-D-glucose. N-linked (GlcNAc...) asparagine glycosylation is present at N204. UDP-alpha-D-glucose is bound by residues S212, R218, and 274–279; that span reads VAASFR. The N-linked (GlcNAc...) asparagine glycan is linked to N373. The short motif at 389–392 is the Prevents secretion from ER element; sequence KIEL.

This sequence belongs to the glycosyltransferase 90 family.

It localises to the endoplasmic reticulum lumen. The catalysed reaction is L-seryl-[EGF-like domain protein] + UDP-alpha-D-xylose = 3-O-(beta-D-xylosyl)-L-seryl-[EGF-like domain protein] + UDP + H(+). It catalyses the reaction L-seryl-[EGF-like domain protein] + UDP-alpha-D-glucose = 3-O-(beta-D-glucosyl)-L-seryl-[EGF-like domain protein] + UDP + H(+). It functions in the pathway protein modification; protein glycosylation. In terms of biological role, dual specificity glycosyltransferase that catalyzes the transfer of glucose and xylose from UDP-glucose and UDP-xylose, respectively, to a serine residue found in the consensus sequence of C-X-S-X-P-C. Specifically targets extracellular EGF repeats of protein such as CRB2, F7, F9 and NOTCH2. Acts as a positive regulator of Notch signaling by mediating O-glucosylation of Notch, leading to regulate muscle development. Notch glucosylation does not affect Notch ligand binding. Required during early development to promote gastrulation: acts by mediating O-glucosylation of CRB2, which is required for CRB2 localization to the cell membrane. The polypeptide is Protein O-glucosyltransferase 1 (POGLUT1) (Bos taurus (Bovine)).